We begin with the raw amino-acid sequence, 388 residues long: NADH-quinone oxidoreductase subunit D 2 (388 aa).

This sequence belongs to the complex I 49 kDa subunit family. In terms of assembly, NDH-1 is composed of 14 different subunits. Subunits NuoB, C, D, E, F, and G constitute the peripheral sector of the complex.

The protein resides in the cell membrane. The enzyme catalyses a quinone + NADH + 5 H(+)(in) = a quinol + NAD(+) + 4 H(+)(out). NDH-1 shuttles electrons from NADH, via FMN and iron-sulfur (Fe-S) centers, to quinones in the respiratory chain. The immediate electron acceptor for the enzyme in this species is believed to be a menaquinone. Couples the redox reaction to proton translocation (for every two electrons transferred, four hydrogen ions are translocated across the cytoplasmic membrane), and thus conserves the redox energy in a proton gradient. The sequence is that of NADH-quinone oxidoreductase subunit D 2 from Salinispora tropica (strain ATCC BAA-916 / DSM 44818 / JCM 13857 / NBRC 105044 / CNB-440).